We begin with the raw amino-acid sequence, 242 residues long: High mobility group protein homolog (242 aa).

DNA-binding regions (HMG box) lie at residues 54 to 122 (PKRN…EANK) and 126 to 197 (KPVK…IDKE).

It localises to the host nucleus. This Acheta domesticus (House cricket) protein is High mobility group protein homolog (EF1).